A 424-amino-acid polypeptide reads, in one-letter code: Hemagglutinin-esterase (424 aa).

The N-terminal stretch at 1–16 (MFLLPRFVLVSCIIGS) is a signal peptide. The interval 7–127 (FVLVSCIIGS…SNDIWMQNKG (121 aa)) is esterase domain 1. Residues 17–392 (LGFDNPPTNV…PICVYDPLPI (376 aa)) lie on the Virion surface side of the membrane. Ser-40 (nucleophile) is an active-site residue. An intrachain disulfide couples Cys-44 to Cys-65. N-linked (GlcNAc...) asparagine; by host glycans are attached at residues Asn-54, Asn-89, Asn-153, Asn-236, and Asn-301. Cystine bridges form between Cys-113-Cys-162, Cys-197-Cys-276, and Cys-205-Cys-249. Residues 128–266 (LFYTQVYKNM…GNYLAISNEL (139 aa)) form a receptor binding region. Residues 267 to 379 (LLTVPTKAIC…RCPTAADINT (113 aa)) form an esterase domain 2 region. A disulfide bridge links Cys-307 with Cys-312. Asn-316 carries an N-linked (GlcNAc...) asparagine; by host glycan. Active-site charge relay system residues include Asp-326 and His-329. A disulfide bridge connects residues Cys-347 and Cys-371. A glycan (N-linked (GlcNAc...) asparagine; by host) is linked at Asn-358. Residues 393–413 (ILLGILLSVAVIIIVVLLLYF) form a helical membrane-spanning segment. Residues 414-424 (MVDNGTRLHDA) lie on the Intravirion side of the membrane. N-linked (GlcNAc...) asparagine; by host glycosylation is present at Asn-417.

Belongs to the influenza type C/coronaviruses hemagglutinin-esterase family. Homodimer; disulfide-linked. Forms a complex with the M protein in the pre-Golgi. Associates then with S-M complex to form a ternary complex S-M-HE. N-glycosylated in the host RER.

It is found in the virion membrane. The protein localises to the host cell membrane. The catalysed reaction is N-acetyl-9-O-acetylneuraminate + H2O = N-acetylneuraminate + acetate + H(+). It carries out the reaction N-acetyl-4-O-acetylneuraminate + H2O = N-acetylneuraminate + acetate + H(+). In terms of biological role, structural protein that makes short spikes at the surface of the virus. Contains receptor binding and receptor-destroying activities. Mediates de-O-acetylation of N-acetyl-4-O-acetylneuraminic acid, which is probably the receptor determinant recognized by the virus on the surface of erythrocytes and susceptible cells. This receptor-destroying activity is important for virus release as it probably helps preventing self-aggregation and ensures the efficient spread of the progeny virus from cell to cell. May serve as a secondary viral attachment protein for initiating infection, the spike protein being the major one. May become a target for both the humoral and the cellular branches of the immune system. This is Hemagglutinin-esterase from Bos taurus (Bovine).